Here is a 156-residue protein sequence, read N- to C-terminus: Small ribosomal subunit protein uS7 (156 aa).

It belongs to the universal ribosomal protein uS7 family. As to quaternary structure, part of the 30S ribosomal subunit. Contacts proteins S9 and S11.

One of the primary rRNA binding proteins, it binds directly to 16S rRNA where it nucleates assembly of the head domain of the 30S subunit. Is located at the subunit interface close to the decoding center, probably blocks exit of the E-site tRNA. The polypeptide is Small ribosomal subunit protein uS7 (Nitratidesulfovibrio vulgaris (strain ATCC 29579 / DSM 644 / CCUG 34227 / NCIMB 8303 / VKM B-1760 / Hildenborough) (Desulfovibrio vulgaris)).